Reading from the N-terminus, the 73-residue chain is Translation initiation factor IF-1 (73 aa).

An S1-like domain is found at 1–73 (MGKKEEAFEV…TKGRIVYRER (73 aa)).

Belongs to the IF-1 family. In terms of assembly, component of the 30S ribosomal translation pre-initiation complex which assembles on the 30S ribosome in the order IF-2 and IF-3, IF-1 and N-formylmethionyl-tRNA(fMet); mRNA recruitment can occur at any time during PIC assembly.

Its subcellular location is the cytoplasm. In terms of biological role, one of the essential components for the initiation of protein synthesis. Stabilizes the binding of IF-2 and IF-3 on the 30S subunit to which N-formylmethionyl-tRNA(fMet) subsequently binds. Helps modulate mRNA selection, yielding the 30S pre-initiation complex (PIC). Upon addition of the 50S ribosomal subunit IF-1, IF-2 and IF-3 are released leaving the mature 70S translation initiation complex. This chain is Translation initiation factor IF-1, found in Rhodopirellula baltica (strain DSM 10527 / NCIMB 13988 / SH1).